A 222-amino-acid polypeptide reads, in one-letter code: Cytochrome b6 (222 aa).

The chain crosses the membrane as a helical span at residues 39–59 (IFYCLGGITLVCFIIQFATGF). Cys42 is a heme c binding site. The heme b site is built by His93 and His107. The next 3 helical transmembrane spans lie at 97–117 (ASMM…TGGF), 123–143 (LTWI…VTGY), and 193–213 (LHTF…FLMI). Positions 194 and 209 each coordinate heme b.

Belongs to the cytochrome b family. PetB subfamily. In terms of assembly, the 4 large subunits of the cytochrome b6-f complex are cytochrome b6, subunit IV (17 kDa polypeptide, PetD), cytochrome f and the Rieske protein, while the 4 small subunits are PetG, PetL, PetM and PetN. The complex functions as a dimer. The cofactor is heme b. Heme c serves as cofactor.

The protein resides in the cellular thylakoid membrane. Its function is as follows. Component of the cytochrome b6-f complex, which mediates electron transfer between photosystem II (PSII) and photosystem I (PSI), cyclic electron flow around PSI, and state transitions. The polypeptide is Cytochrome b6 (Prochlorothrix hollandica).